The following is a 224-amino-acid chain: Transposase for insertion sequence element IS257 in transposon Tn4003 (224 aa).

Residues 33-52 constitute a DNA-binding region (H-T-H motif); that stretch reads EILRGRGVNVHHSTVYRWVQ. The Integrase catalytic domain maps to 73-222; the sequence is WRIDETYIKI…SPCHEISIML (150 aa).

Involved in the transposition of the insertion sequence. The sequence is that of Transposase for insertion sequence element IS257 in transposon Tn4003 from Staphylococcus aureus.